A 61-amino-acid polypeptide reads, in one-letter code: Photosystem II reaction center protein K (61 aa).

A propeptide spanning residues 1-24 is cleaved from the precursor; the sequence is MLNIFSLISICLNSALYSSSFFFG. The helical transmembrane segment at 40–60 threads the bilayer; it reads MPVIPVFFFLLAFVWQAAVSF.

The protein belongs to the PsbK family. PSII is composed of 1 copy each of membrane proteins PsbA, PsbB, PsbC, PsbD, PsbE, PsbF, PsbH, PsbI, PsbJ, PsbK, PsbL, PsbM, PsbT, PsbX, PsbY, PsbZ, Psb30/Ycf12, at least 3 peripheral proteins of the oxygen-evolving complex and a large number of cofactors. It forms dimeric complexes.

The protein localises to the plastid. It localises to the chloroplast thylakoid membrane. In terms of biological role, one of the components of the core complex of photosystem II (PSII). PSII is a light-driven water:plastoquinone oxidoreductase that uses light energy to abstract electrons from H(2)O, generating O(2) and a proton gradient subsequently used for ATP formation. It consists of a core antenna complex that captures photons, and an electron transfer chain that converts photonic excitation into a charge separation. The sequence is that of Photosystem II reaction center protein K from Jasminum nudiflorum (Winter jasmine).